The primary structure comprises 175 residues: Regenerating islet-derived protein 3-gamma (175 aa).

Residues 1–26 (MLPPMALPSVSWMLLSCLILLCQVQG) form the signal peptide. The propeptide occupies 27–37 (EETQKELPSPR). Intrachain disulfides connect Cys-40/Cys-51, Cys-68/Cys-171, and Cys-146/Cys-163. The C-type lectin domain occupies 47–172 (YGSPCYALFL…CDAKLPYVCK (126 aa)). The sufficient to activate EXTL3 stretch occupies residues 103–118 (WIGLHDPTQGSEPDGD). His-107 serves as a coordination point for Zn(2+). The short motif at 114-116 (EPD) is the EPN element. The Zn(2+) site is built by Glu-121 and His-145.

Forms a hexameric membrane-permeabilizing oligomeric pore on membrane phospholipids. The hexamer is formed by three dimers related by helical symmetry. Forms filaments, filamentation traps pore complexes and limits damage to host cells. Interacts with EXTL3. In terms of processing, proteolytic processing by trypsin removes an inhibitory N-terminal propeptide and is essential for peptidoglycan binding and antibacterial activity. In terms of tissue distribution, predominantly expressed in pancreas, where it may be restricted to exocrine pancreas. Moderate expression levels in testis and weak in heart, kidney and placenta.

Its subcellular location is the secreted. It is found in the cytoplasm. Lipopolysaccharide inhibits pore-forming activity, explaining why is bactericidal for Gram-positive but not Gram-negative bacteria. In terms of biological role, bactericidal C-type lectin which acts exclusively against Gram-positive bacteria and mediates bacterial killing by binding to surface-exposed carbohydrate moieties of peptidoglycan. Restricts bacterial colonization of the intestinal epithelial surface and consequently limits activation of adaptive immune responses by the microbiota. Acts as a hormone in response to different stimuli like anti-inflammatory signals, such as IL17A, or gut microbiome. Is secreted by different cell types to activate its receptor EXTL3 and induce cell specific signaling pathways. Induced by IL17A in keratinocytes, regulates keratinocyte proliferation and differentiation after skin injury. In parallel, inhibits skin inflammation through the inhibition of inflammatory cytokines such as IL6 and TNF. Induced by IL22 in lung epithelial cells, inhibits cytokine production and regulates allergic airway inflammation. Induced in small intestine by inulin-enriched diet and Lactobacillus gasseri enriched microbiome, plays a role in the improvement of gut barrier function, the regulation of energy balance and glucose levels. Modulates microbiota composition in duodenal contents. Produced by nociceptor in response to endotoxins, prevents endotoxic death by targeting kynurenine pathway in microglia. Functionally, has bacteriostatic activity. Its function is as follows. Has bactericidal activity against L.monocytogenes and methicillin-resistant S.aureus. The protein is Regenerating islet-derived protein 3-gamma of Homo sapiens (Human).